Reading from the N-terminus, the 416-residue chain is CinA-like protein (416 aa).

This sequence belongs to the CinA family.

This Nostoc punctiforme (strain ATCC 29133 / PCC 73102) protein is CinA-like protein.